The primary structure comprises 338 residues: Phosphatidate cytidylyltransferase, mitochondrial (338 aa).

It belongs to the TAM41 family. The cofactor is Mg(2+).

Its subcellular location is the mitochondrion inner membrane. It catalyses the reaction a 1,2-diacyl-sn-glycero-3-phosphate + CTP + H(+) = a CDP-1,2-diacyl-sn-glycerol + diphosphate. It participates in phospholipid metabolism; CDP-diacylglycerol biosynthesis; CDP-diacylglycerol from sn-glycerol 3-phosphate: step 3/3. Its function is as follows. Catalyzes the conversion of phosphatidic acid (PA) to CDP-diacylglycerol (CDP-DAG), an essential intermediate in the synthesis of phosphatidylglycerol, cardiolipin and phosphatidylinositol. The sequence is that of Phosphatidate cytidylyltransferase, mitochondrial (tamm41) from Xenopus laevis (African clawed frog).